The chain runs to 131 residues: Ribosome-binding factor A (131 aa).

Belongs to the RbfA family. As to quaternary structure, monomer. Binds 30S ribosomal subunits, but not 50S ribosomal subunits or 70S ribosomes.

The protein localises to the cytoplasm. Functionally, one of several proteins that assist in the late maturation steps of the functional core of the 30S ribosomal subunit. Associates with free 30S ribosomal subunits (but not with 30S subunits that are part of 70S ribosomes or polysomes). Required for efficient processing of 16S rRNA. May interact with the 5'-terminal helix region of 16S rRNA. This is Ribosome-binding factor A from Picosynechococcus sp. (strain ATCC 27264 / PCC 7002 / PR-6) (Agmenellum quadruplicatum).